A 626-amino-acid chain; its full sequence is MPPMAKNAAVTDVVHLDSDSDSDNGVVGGRESASTIAGAATMAPRETLECRSFWKAGDYFVIPNVVTPTAPGMLEHARVHPRFLHSNATSHKWAFGAIAELLDNAVDEIQNGATFVKIDKINIVKDNSPALVFQDDGGGMDPAGLRKCMSLGYSSKKSNTTIGQYGNGFKTSTMRLGADAIVFSRSTRGGTSTQSVGILSYTFLRKTGQDDVTVPMIDIDISKERPQPIIYGSPEDWAANLEILLKWSPFSTEDELLQQFEDVGTHGTKVIIYNLWLNDEGIYELSFDDDEEDIRLRDESVNDGKRLHHKILELRSHISYHLRYSLRAYASMLYLKKFKNFKIIIRGIPVEQFNIADGFRFPEIIKYKPHTATTEQASTEIKIGFVKEAPKLAICGFNVYHKNRLIRPFWKVTMGGDSTGHGVVGVLEANFIEPAHDKQDFERSSLFQRLEARLKKIVYSYWYSHCHLLGYHKYQMPADKSKKIAIPDQPPTISTVNPSPLPSDKISQGGPIIREINLSNATSSRTVAFASPHLRNSTGLRSNFQPVQLNPQPTAADTGNNLDGKSAGEIRQENLQLFMRCEEYIKKENETEQTVKSLEKELEEFKSKCAHLALLVDAKKKEMQQA.

Residues 579-626 (MRCEEYIKKENETEQTVKSLEKELEEFKSKCAHLALLVDAKKKEMQQA) adopt a coiled-coil conformation.

It belongs to the MORC ATPase protein family. In terms of assembly, homodimer and heterodimer with MORC6. Component of an RNA-directed DNA methylation (RdDM) complex that contains at least MORC6, MORC1/CRT1, MORC2, SWI3D and SUVH9. Binds directly to SUVH9. The cofactor is Mg(2+). Requires Mn(2+) as cofactor.

The protein resides in the nucleus. It localises to the endosome. Functionally, mediator of defense signaling triggered by distinct classes of R proteins. Required during hypersensitive response (HR) that confers disease resistance to turnip crinkle virus (TCV). Contributes to resistance against Pseudomonas syringae and Hyaloperonospora arabidopsidis, at early stages prior to cytosolic calcium ions Ca(2+) accumulation. Required for pathogen-associated molecular pattern (PAMP)-triggered immunity, basal resistance, non-host resistance and systemic acquired resistance (SAR). Involved in RNA-directed DNA methylation (RdDM) as a component of the RdDM machinery and required for gene silencing. May also be involved in the regulation of chromatin architecture to maintain gene silencing. Exhibits ATPase activity. This is Protein MICRORCHIDIA 2 from Arabidopsis thaliana (Mouse-ear cress).